Consider the following 32-residue polypeptide: MVCPKILMKCKHDSDCLLDCVCLEDIGYCGVS.

3 disulfides stabilise this stretch: cysteine 3/cysteine 20, cysteine 10/cysteine 22, and cysteine 16/cysteine 29.

The protein belongs to the protease inhibitor I7 (squash-type serine protease inhibitor) family.

The protein localises to the secreted. In terms of biological role, inhibits trypsin. This chain is Trypsin inhibitor 2b, found in Cucumis sativus (Cucumber).